The following is a 263-amino-acid chain: Shikimate dehydrogenase (NADP(+)) (263 aa).

Shikimate-binding positions include 14-16 (SLS) and threonine 60. Lysine 64 serves as the catalytic Proton acceptor. Residues asparagine 85 and aspartate 100 each coordinate shikimate. NADP(+)-binding positions include 123–127 (GAGGA), 146–151 (NRTPQR), and leucine 205. Residue tyrosine 207 coordinates shikimate. Residue glycine 228 coordinates NADP(+). Residue glutamine 235 participates in shikimate binding.

This sequence belongs to the shikimate dehydrogenase family. As to quaternary structure, homodimer.

It carries out the reaction shikimate + NADP(+) = 3-dehydroshikimate + NADPH + H(+). It participates in metabolic intermediate biosynthesis; chorismate biosynthesis; chorismate from D-erythrose 4-phosphate and phosphoenolpyruvate: step 4/7. In terms of biological role, involved in the biosynthesis of the chorismate, which leads to the biosynthesis of aromatic amino acids. Catalyzes the reversible NADPH linked reduction of 3-dehydroshikimate (DHSA) to yield shikimate (SA). In Thermus thermophilus (strain ATCC 27634 / DSM 579 / HB8), this protein is Shikimate dehydrogenase (NADP(+)).